The chain runs to 372 residues: tRNA-specific 2-thiouridylase MnmA (372 aa).

Residues 16-23 and methionine 42 each bind ATP; that span reads GMSGGVDS. Residues 102–104 form an interaction with target base in tRNA region; it reads NPD. Cysteine 107 functions as the Nucleophile in the catalytic mechanism. A disulfide bond links cysteine 107 and cysteine 205. Glycine 132 provides a ligand contact to ATP. The tract at residues 155-157 is interaction with tRNA; the sequence is KDQ. Cysteine 205 functions as the Cysteine persulfide intermediate in the catalytic mechanism. The segment at 317–318 is interaction with tRNA; it reads RY.

The protein belongs to the MnmA/TRMU family.

Its subcellular location is the cytoplasm. It carries out the reaction S-sulfanyl-L-cysteinyl-[protein] + uridine(34) in tRNA + AH2 + ATP = 2-thiouridine(34) in tRNA + L-cysteinyl-[protein] + A + AMP + diphosphate + H(+). Catalyzes the 2-thiolation of uridine at the wobble position (U34) of tRNA, leading to the formation of s(2)U34. This chain is tRNA-specific 2-thiouridylase MnmA, found in Shewanella sp. (strain MR-4).